We begin with the raw amino-acid sequence, 96 residues long: MTQIMYNYPAMLDHAGNMSACAGALQGVGIDIAAEQAALQACWGGDTGISYQAWQVQWNQATEEMVRAYHAMANTHQNNTLAMLTRDQAEAAKWGG.

The protein belongs to the WXG100 family. ESAT-6 subfamily.

It localises to the secreted. The protein is ESAT-6-like protein EsxR of Mycobacterium leprae (strain TN).